Here is a 977-residue protein sequence, read N- to C-terminus: Disks large-associated protein 3 (977 aa).

Positions 1–10 are enriched in basic and acidic residues; that stretch reads MRGYHGDRGS. 6 disordered regions span residues 1-24, 52-96, 137-167, 181-289, 398-417, and 529-582; these read MRGY…QHMD, AGLG…MYPG, FHTL…ESPS, AKSH…CLDA, AMGD…SPKA, and PGSS…SADG. Residues 53-73 show a composition bias toward low complexity; the sequence is GLGHLSPEGPLSLSEGPSSVG. Ser-58 carries the post-translational modification Phosphoserine. Residues 74-87 are compositionally biased toward gly residues; the sequence is PEGGPGGVGAGGGS. Positions 189 to 201 are enriched in basic and acidic residues; sequence PGKRDYNGPKADG. The segment covering 221–245 has biased composition (basic residues); sequence SHHHHHHHHHHHHQSRHGKRSKSKD. The span at 258–271 shows a compositional bias: low complexity; sequence GWWSSDDNLDSDSG. Ser-404, Ser-407, Ser-410, and Ser-414 each carry phosphoserine. Over residues 538–547 the composition is skewed to pro residues; it reads APPPIPPGSQ. Ser-641 and Ser-643 each carry phosphoserine. 2 disordered regions span residues 739–788 and 906–939; these read EGYP…RTSP and EEKK…RQRQ. Composition is skewed to basic and acidic residues over residues 767–777 and 925–939; these read GRRDSWMERGS and PVKE…RQRQ. Phosphoserine is present on residues Ser-930, Ser-933, and Ser-965.

This sequence belongs to the SAPAP family. In terms of assembly, interacts with DLG4/PSD-95. As to expression, highly expressed in central and peripherical nervous system (at protein level).

It localises to the cell membrane. Its subcellular location is the postsynaptic density. It is found in the synapse. Its function is as follows. May play a role in the molecular organization of synapses and neuronal cell signaling. Could be an adapter protein linking ion channel to the subsynaptic cytoskeleton. May induce enrichment of PSD-95/SAP90 at the plasma membrane. The protein is Disks large-associated protein 3 (Dlgap3) of Mus musculus (Mouse).